We begin with the raw amino-acid sequence, 339 residues long: Flap endonuclease 1 (339 aa).

An N-domain region spans residues 1-99 (MGVNLKEIVD…VAWEKRKKHK (99 aa)). Aspartate 29, aspartate 81, glutamate 153, glutamate 155, aspartate 174, aspartate 176, and aspartate 237 together coordinate Mg(2+). The I-domain stretch occupies residues 117-258 (EAIKYAKSLG…TAIEIVKRFG (142 aa)). The segment at 329 to 337 (NQKTLFSFF) is interaction with PCNA.

It belongs to the XPG/RAD2 endonuclease family. FEN1 subfamily. As to quaternary structure, interacts with PCNA. PCNA stimulates the nuclease activity without altering cleavage specificity. Mg(2+) serves as cofactor.

Its function is as follows. Structure-specific nuclease with 5'-flap endonuclease and 5'-3' exonuclease activities involved in DNA replication and repair. During DNA replication, cleaves the 5'-overhanging flap structure that is generated by displacement synthesis when DNA polymerase encounters the 5'-end of a downstream Okazaki fragment. Binds the unpaired 3'-DNA end and kinks the DNA to facilitate 5' cleavage specificity. Cleaves one nucleotide into the double-stranded DNA from the junction in flap DNA, leaving a nick for ligation. Also involved in the base excision repair (BER) pathway. Acts as a genome stabilization factor that prevents flaps from equilibrating into structures that lead to duplications and deletions. Also possesses 5'-3' exonuclease activity on nicked or gapped double-stranded DNA. The chain is Flap endonuclease 1 from Nanoarchaeum equitans (strain Kin4-M).